Reading from the N-terminus, the 249-residue chain is Uridylate kinase (249 aa).

Residue 21–24 (KLSG) participates in ATP binding. A UMP-binding site is contributed by Gly63. ATP is bound by residues Gly64 and Arg68. UMP is bound by residues Asp84 and 145–152 (TGNPFVTT). ATP-binding residues include Thr172, Tyr178, and Asp181.

This sequence belongs to the UMP kinase family. In terms of assembly, homohexamer.

The protein localises to the cytoplasm. The catalysed reaction is UMP + ATP = UDP + ADP. It participates in pyrimidine metabolism; CTP biosynthesis via de novo pathway; UDP from UMP (UMPK route): step 1/1. Its activity is regulated as follows. Inhibited by UTP. Functionally, catalyzes the reversible phosphorylation of UMP to UDP. The chain is Uridylate kinase from Francisella tularensis subsp. holarctica (strain FTNF002-00 / FTA).